Here is a 459-residue protein sequence, read N- to C-terminus: Probable ECA polymerase (459 aa).

Transmembrane regions (helical) follow at residues 3–23, 37–57, 65–85, 119–139, 154–174, 181–201, 206–226, 227–247, 340–360, 377–397, and 409–429; these read LTQF…ILTL, IFFS…TCLL, VVPV…YGIY, LASV…FLLF, GVAL…VYFL, WLFF…VVGG, IIIA…ITLW, MLVT…LKRY, LVVM…GLII, YKAA…IVLA, and VFFC…YWLF.

The protein belongs to the WzyE family. In terms of assembly, probably part of a complex composed of WzxE, WzyE and WzzE.

Its subcellular location is the cell inner membrane. It participates in bacterial outer membrane biogenesis; enterobacterial common antigen biosynthesis. In terms of biological role, probably involved in the polymerization of enterobacterial common antigen (ECA) trisaccharide repeat units. The protein is Probable ECA polymerase of Photorhabdus laumondii subsp. laumondii (strain DSM 15139 / CIP 105565 / TT01) (Photorhabdus luminescens subsp. laumondii).